The following is a 106-amino-acid chain: Large ribosomal subunit protein uL24 (106 aa).

The segment at 69 to 106 (SNLNPVDPKTGKATRVGRKVSSEGTLVRYSKKSGEEIK) is disordered.

It belongs to the universal ribosomal protein uL24 family. Part of the 50S ribosomal subunit.

Functionally, one of two assembly initiator proteins, it binds directly to the 5'-end of the 23S rRNA, where it nucleates assembly of the 50S subunit. One of the proteins that surrounds the polypeptide exit tunnel on the outside of the subunit. This chain is Large ribosomal subunit protein uL24, found in Bacteroides fragilis (strain ATCC 25285 / DSM 2151 / CCUG 4856 / JCM 11019 / LMG 10263 / NCTC 9343 / Onslow / VPI 2553 / EN-2).